Reading from the N-terminus, the 212-residue chain is Large ribosomal subunit protein uL3 (212 aa).

Residues 135–161 (MTHGNSLSHRAPGSIGQNQSPGKVFKG) are disordered. Residue Q153 is modified to N5-methylglutamine.

It belongs to the universal ribosomal protein uL3 family. Part of the 50S ribosomal subunit. Forms a cluster with proteins L14 and L19. Methylated by PrmB.

One of the primary rRNA binding proteins, it binds directly near the 3'-end of the 23S rRNA, where it nucleates assembly of the 50S subunit. This chain is Large ribosomal subunit protein uL3, found in Alteromonas mediterranea (strain DSM 17117 / CIP 110805 / LMG 28347 / Deep ecotype).